A 248-amino-acid chain; its full sequence is Ribosomal RNA small subunit methyltransferase J (248 aa).

Residues 98–99, 114–115, 150–151, and Asp-168 contribute to the S-adenosyl-L-methionine site; these read RD, ER, and SS.

This sequence belongs to the methyltransferase superfamily. RsmJ family.

Its subcellular location is the cytoplasm. The catalysed reaction is guanosine(1516) in 16S rRNA + S-adenosyl-L-methionine = N(2)-methylguanosine(1516) in 16S rRNA + S-adenosyl-L-homocysteine + H(+). In terms of biological role, specifically methylates the guanosine in position 1516 of 16S rRNA. The chain is Ribosomal RNA small subunit methyltransferase J from Shewanella amazonensis (strain ATCC BAA-1098 / SB2B).